A 96-amino-acid polypeptide reads, in one-letter code: DNA-directed RNA polymerase subunit Rpo11 (96 aa).

It belongs to the archaeal Rpo11/eukaryotic RPB11/RPC19 RNA polymerase subunit family. As to quaternary structure, part of the RNA polymerase complex.

It is found in the cytoplasm. It catalyses the reaction RNA(n) + a ribonucleoside 5'-triphosphate = RNA(n+1) + diphosphate. Functionally, DNA-dependent RNA polymerase (RNAP) catalyzes the transcription of DNA into RNA using the four ribonucleoside triphosphates as substrates. This is DNA-directed RNA polymerase subunit Rpo11 from Haloquadratum walsbyi (strain DSM 16790 / HBSQ001).